We begin with the raw amino-acid sequence, 921 residues long: Extended synaptotagmin-2 (921 aa).

Residues 1–103 lie on the Cytoplasmic side of the membrane; it reads MTANRDAALS…RPGGPENPGG (103 aa). Residues 1-103 are disordered; sequence MTANRDAALS…RPGGPENPGG (103 aa). Residues 58 to 75 show a composition bias toward basic residues; it reads GARRRAKTARGLRGHRQR. The helical transmembrane segment at 104–124 threads the bilayer; that stretch reads VLSVELPGLLAQLARSFALLL. The Lumenal portion of the chain corresponds to 125-127; it reads PVY. Residues 128 to 148 form a helical membrane-spanning segment; it reads ALGYLGLSFSWVLLALALLAW. Over 149–921 the chain is Cytoplasmic; that stretch reads CRRSRGLKAL…EDGTRPQAMT (773 aa). Residues 191–370 form the SMP-LTD domain; the sequence is DTERAEWLNK…LPNRITVPLV (180 aa). C2 domains are found at residues 369–489 and 514–639; these read LVSE…DEWF and NLDK…QLSN. Ca(2+)-binding residues include Lys-400, Asp-401, Asp-413, Asp-460, Glu-461, Asp-462, Asp-464, Asp-466, and Asp-467. The tract at residues 660–754 is disordered; it reads RERPPDHQHS…GHISVKEPTP (95 aa). Phosphoserine is present on residues Ser-691 and Ser-693. Position 705 is a phosphothreonine (Thr-705). Phosphoserine is present on residues Ser-736, Ser-738, Ser-739, Ser-743, Ser-748, Ser-755, Ser-758, and Ser-761. A C2 3 domain is found at 786-908; it reads PLGQIQLTIR…ELAKGWTQWY (123 aa). The required for phosphatidylinositol 4,5-bisphosphate-dependent location at the cell membrane stretch occupies residues 833–840; it reads KRRSGRRK.

It belongs to the extended synaptotagmin family. Homodimer. Interacts with ESYT1 and ESYT3. Interacts with FGFR1 that has been activated by FGF1 binding. Interacts with the AP-2 complex; identified in a complex with the AP-2 complex and FGFR1. In terms of tissue distribution, widely expressed with high level in cerebellum.

It is found in the cell membrane. Its subcellular location is the endoplasmic reticulum membrane. Functionally, tethers the endoplasmic reticulum to the cell membrane and promotes the formation of appositions between the endoplasmic reticulum and the cell membrane. Binds glycerophospholipids in a barrel-like domain and may play a role in cellular lipid transport. Plays a role in FGF signaling via its role in the rapid internalization of FGFR1 that has been activated by FGF1 binding; this occurs most likely via the AP-2 complex. Promotes the localization of SACM1L at endoplasmic reticulum-plasma membrane contact sites (EPCS). The sequence is that of Extended synaptotagmin-2 from Homo sapiens (Human).